The sequence spans 276 residues: Undecaprenyl-diphosphatase 2 (276 aa).

Helical transmembrane passes span 1 to 21, 44 to 64, 87 to 107, 114 to 134, 150 to 170, 190 to 210, 222 to 242, and 251 to 271; these read MSLW…LFPV, QLLP…LWYF, GHLM…GLLL, VFHD…LLWL, LTFK…IPGF, AAEF…LLEL, DALL…RFLM, and LASF…WFMF.

This sequence belongs to the UppP family.

Its subcellular location is the cell inner membrane. It catalyses the reaction di-trans,octa-cis-undecaprenyl diphosphate + H2O = di-trans,octa-cis-undecaprenyl phosphate + phosphate + H(+). Its function is as follows. Catalyzes the dephosphorylation of undecaprenyl diphosphate (UPP). Confers resistance to bacitracin. The sequence is that of Undecaprenyl-diphosphatase 2 from Burkholderia thailandensis (strain ATCC 700388 / DSM 13276 / CCUG 48851 / CIP 106301 / E264).